The sequence spans 536 residues: Solute carrier family 2, facilitated glucose transporter member 10 (536 aa).

At 1–15 (MGLRPAVLLLCASVS) the chain is on the cytoplasmic side. A helical transmembrane segment spans residues 16–36 (LLGGLTFGYELAVISGALLPL). Topologically, residues 37-48 (QLNFGLSCLEQE) are extracellular. Residues 49-69 (LLVGSLLLGALLASLVGGFLI) form a helical membrane-spanning segment. The Cytoplasmic portion of the chain corresponds to 70 to 82 (DCYGRRRAILGSN). Residues 83-103 (AVLLAGSLILGLASSLPWLLL) form a helical membrane-spanning segment. The Extracellular portion of the chain corresponds to 104 to 107 (GRLS). A helical membrane pass occupies residues 108–128 (VGFAISLSSMACCIYVSELVG). Residues 129 to 132 (PRQR) are Cytoplasmic-facing. Residues 133-153 (GVLVSLYEVGITVGILFSYGL) traverse the membrane as a helical segment. Residues 154 to 166 (NYVLAGSPWGWRH) are Extracellular-facing. Residues 167-187 (MFGWAAAPALLQSLSLFLLPA) form a helical membrane-spanning segment. Residues 188–232 (GAEGTAAPKDLIPLQGRETSKPGLVKPQYSFLDLFRAQDGMWSRT) are Cytoplasmic-facing. The helical transmembrane segment at 233 to 253 (VVGLGLVLFQQLTGQPNVLYY) threads the bilayer. 242-243 (QQ) serves as a coordination point for D-glucose. At 254–269 (ASTIFRSVGFHGGSSA) the chain is on the extracellular side. Residues 270 to 290 (VLASVGLGTVKVAATLVATGL) form a helical membrane-spanning segment. The Cytoplasmic segment spans residues 291 to 298 (VDRAGRRV). Residues 299–319 (LLLFGCALMALSVSGIGLVSF) form a helical membrane-spanning segment. Residues 320–402 (AVSLDSGPSC…VPTSPILEHT (83 aa)) are Extracellular-facing. The chain crosses the membrane as a helical span at residues 403–423 (LLCWSALVCMMVYVSAFSVGF). Residues 424–442 (GPVTWLVLSEIYPAEIRGR) lie on the Cytoplasmic side of the membrane. D-glucose is bound at residue W428. Residues 443-463 (AFAFCSSFNWAANLFISLSFL) form a helical membrane-spanning segment. Topologically, residues 464–468 (DLIGA) are extracellular. A helical membrane pass occupies residues 469–489 (IGLAWTFLLYGLTAVLGLAFI). The Cytoplasmic segment spans residues 490 to 536 (YLLVPETKGQSLAEIEQQFQTSRFPLNFGHRQRIGIQYHRLDVSSAS).

It belongs to the major facilitator superfamily. Sugar transporter (TC 2.A.1.1) family. Glucose transporter subfamily.

Its subcellular location is the endomembrane system. The protein resides in the cytoplasm. It localises to the perinuclear region. The catalysed reaction is D-glucose(out) = D-glucose(in). In terms of biological role, facilitative glucose transporter required for the development of the cardiovascular system. This is Solute carrier family 2, facilitated glucose transporter member 10 from Mus musculus (Mouse).